Here is a 201-residue protein sequence, read N- to C-terminus: Recombination protein RecR (201 aa).

Residues 57–72 form a C4-type zinc finger; sequence CKYCANFTNKDECDIC. In terms of domain architecture, Toprim spans 80-176; the sequence is TKLMIVTTNE…QIYRIGFGIP (97 aa).

Belongs to the RecR family.

Its function is as follows. May play a role in DNA repair. It seems to be involved in an RecBC-independent recombinational process of DNA repair. It may act with RecF and RecO. This Ureaplasma parvum serovar 3 (strain ATCC 27815 / 27 / NCTC 11736) protein is Recombination protein RecR.